Reading from the N-terminus, the 2009-residue chain is Sodium channel protein type 1 subunit alpha (2009 aa).

Topologically, residues 1 to 128 are cytoplasmic; that stretch reads MEQTVLVPPG…KIAIKILVHS (128 aa). Residues 28–48 are compositionally biased toward basic and acidic residues; it reads RIAEEKAKNPKPDKKDDDENG. The tract at residues 28–60 is disordered; the sequence is RIAEEKAKNPKPDKKDDDENGPKPNSDLEAGKN. The I repeat unit spans residues 110–454; sequence ILTPFNPLRK…QQMLEQLKKQ (345 aa). A helical transmembrane segment spans residues 129-146; the sequence is LFSMLIMCTILTNCVFMT. Residues 147–152 lie on the Extracellular side of the membrane; the sequence is MSNPPD. The chain crosses the membrane as a helical span at residues 153–177; the sequence is WTKNVEYTFTGIYTFESLIKIIARG. Residues 178-188 lie on the Cytoplasmic side of the membrane; sequence FCLEDFTFLRD. Residues 189-205 traverse the membrane as a helical segment; sequence PWNWLDFTVITFAYVTE. Over 206 to 213 the chain is Extracellular; that stretch reads FVDLGNVS. A helical transmembrane segment spans residues 214–235; the sequence is ALRTFRVLRALKTISVIPGLKT. Residues 236–245 are Cytoplasmic-facing; sequence IVGALIQSVK. A helical membrane pass occupies residues 246 to 269; that stretch reads KLSDVMILTVFCLSVFALIGLQLF. The Extracellular portion of the chain corresponds to 270 to 369; that stretch reads MGNLRNKCVQ…YGYTSFDTFS (100 aa). 2 disulfides stabilise this stretch: C277-C345 and C336-C351. N-linked (GlcNAc...) asparagine glycans are attached at residues N295, N301, N306, and N338. An intramembrane region (pore-forming) is located at residues 370 to 384; sequence WAFLSLFRLMTQDFW. The Extracellular segment spans residues 385 to 397; that stretch reads ENLYQLTLRAAGK. A helical transmembrane segment spans residues 398-423; the sequence is TYMIFFVLVIFLGSFYLINLILAVVA. Topologically, residues 424–768 are cytoplasmic; it reads MAYEEQNQAT…HIVNLVVMDP (345 aa). The segment at 455–528 is disordered; the sequence is QEAAQQAAAT…EFHKSESEDS (74 aa). The span at 456-466 shows a compositional bias: low complexity; sequence EAAQQAAATTA. S470 carries the phosphoserine modification. A compositionally biased stretch (low complexity) spans 479-492; the sequence is LSDSSSEASKLSSK. The segment covering 495–506 has biased composition (basic residues); sequence KERRNRRKKRKQ. The span at 507 to 528 shows a compositional bias: basic and acidic residues; that stretch reads KEQSGGEEKDDDEFHKSESEDS. 6 positions are modified to phosphoserine: S523, S525, S550, S551, S607, and S730. The disordered stretch occupies residues 584–627; the sequence is VGSENDFADDEHSTFEDNESRRDSLFVPRRHGERRNSNLSQTSR. Positions 593–607 are enriched in basic and acidic residues; that stretch reads DEHSTFEDNESRRDS. The II repeat unit spans residues 750 to 1022; sequence CSPYWLKVKH…QIAVDRMHKG (273 aa). Residues 769-787 traverse the membrane as a helical segment; it reads FVDLAITICIVLNTLFMAM. The Extracellular segment spans residues 788–797; that stretch reads EHYPMTEHFN. Residues 798–820 traverse the membrane as a helical segment; sequence HVLTVGNLVFTGIFTAEMFLKII. At 821 to 830 the chain is on the cytoplasmic side; that stretch reads AMDPYYYFQE. A helical transmembrane segment spans residues 831–849; the sequence is GWNIFDGFIVTLSLVELGL. The Extracellular portion of the chain corresponds to 850 to 854; sequence ANVEG. The chain crosses the membrane as a helical span at residues 855 to 874; sequence LSVLRSFRLLRVFKLAKSWP. At 875-891 the chain is on the cytoplasmic side; it reads TLNMLIKIIGNSVGALG. Residues 892-912 traverse the membrane as a helical segment; it reads NLTLVLAIIVFIFAVVGMQLF. The Extracellular segment spans residues 913–938; that stretch reads GKSYKDCVCKIATDCKLPRWHMNDFF. A disulfide bridge links C921 with C927. An intramembrane region (pore-forming) is located at residues 939–952; it reads HSFLIVFRVLCGEW. At 953 to 965 the chain is on the extracellular side; it reads IETMWDCMEVAGQ. An intrachain disulfide couples C959 to C968. The chain crosses the membrane as a helical span at residues 966-992; sequence AMCLTVFMMVMVIGNLVVLNLFLALLL. The Cytoplasmic portion of the chain corresponds to 993–1218; sequence SSFSADNLAA…RTCFRIVEHN (226 aa). Residues 1129 to 1163 form a disordered region; it reads TEDFSSESDLEESKEKLNESSSSSEGSTVDIGAPA. The III repeat unit spans residues 1200-1514; it reads RGKQWWNLRR…KKYYNAMKKL (315 aa). Residues 1219–1237 traverse the membrane as a helical segment; it reads WFETFIVFMILLSSGALAF. At 1238 to 1250 the chain is on the extracellular side; it reads EDIYIDQRKTIKT. The helical transmembrane segment at 1251–1276 threads the bilayer; that stretch reads MLEYADKVFTYIFILEMLLKWVAYGY. Residues 1277 to 1278 are Cytoplasmic-facing; sequence QT. The helical transmembrane segment at 1279-1304 threads the bilayer; it reads YFTNAWCWLDFLIVDVSLVSLTANAL. Residues 1305–1313 lie on the Extracellular side of the membrane; that stretch reads GYSELGAIK. Residues 1314–1332 form a helical membrane-spanning segment; it reads SLRTLRALRPLRALSRFEG. Over 1333–1345 the chain is Cytoplasmic; the sequence is MRVVVNALLGAIP. A helical membrane pass occupies residues 1346-1369; the sequence is SIMNVLLVCLIFWLIFSIMGVNLF. The Extracellular segment spans residues 1370-1415; it reads AGKFYHCVNTTTGDIFEISEVNNHSDCLKLIERNETARWKNVKVNF. The cysteines at positions 1376 and 1396 are disulfide-linked. The pore-forming intramembrane region spans 1416–1433; the sequence is DNVGFGYLSLLQVATFKG. The Extracellular portion of the chain corresponds to 1434–1457; the sequence is WMDIMYAAVDSRNVELQPKYEESL. The helical transmembrane segment at 1458–1483 threads the bilayer; that stretch reads YMYLYFVIFIIFGSFFTLNLFIGVII. At 1484 to 1541 the chain is on the cytoplasmic side; the sequence is DNFNQQKKKFGGQDIFMTEEQKKYYNAMKKLGSKKPQKPIPRPGNKFQGMVFDFVTRQ. Residue S1516 is modified to Phosphoserine; by PKC. The IV repeat unit spans residues 1523–1821; the sequence is IPRPGNKFQG…WEKFDPDATQ (299 aa). The helical transmembrane segment at 1542-1560 threads the bilayer; the sequence is VFDISIMILICLNMVTMMV. The Extracellular portion of the chain corresponds to 1561–1571; the sequence is ETDDQSDYVTS. Residues 1561–1571 form an S1-S2 loop of repeat IV region; the sequence is ETDDQSDYVTS. Residues 1572-1593 form a helical membrane-spanning segment; it reads ILSRINLVFIVLFTGECVLKLI. The Cytoplasmic portion of the chain corresponds to 1594-1601; it reads SLRHYYFT. A helical membrane pass occupies residues 1602–1623; it reads IGWNIFDFVVVILSIVGMFLAE. The tract at residues 1619-1636 is S3b-S4 loop of repeat IV; it reads MFLAELIEKYFVSPTLFR. Residues 1624–1636 are Extracellular-facing; that stretch reads LIEKYFVSPTLFR. A helical membrane pass occupies residues 1637–1655; sequence VIRLARIGRILRLIKGAKG. Topologically, residues 1656–1665 are cytoplasmic; that stretch reads IRTLLFALMM. Residues 1666 to 1688 traverse the membrane as a helical segment; the sequence is SLPALFNIGLLLFLVMFIYAIFG. Residues 1689-1711 are Extracellular-facing; sequence MSNFAYVKREVGIDDMFNFETFG. The pore-forming intramembrane region spans 1712 to 1726; the sequence is NSMICLFQITTSAGW. Over 1727 to 1759 the chain is Extracellular; the sequence is DGLLAPILNSKPPDCDPNKVNPGSSVKGDCGNP. C1741 and C1756 are disulfide-bonded. A helical membrane pass occupies residues 1760-1788; the sequence is SVGIFFFVSYIIISFLVVVNMYIAVILEN. The Cytoplasmic portion of the chain corresponds to 1789–2009; sequence FSVATEESAE…EGKDEKAKGK (221 aa). Residues 1915 to 1944 enclose the IQ domain; that stretch reads EEVSAVIIQRAYRRHLLKRTVKQASFTYNK. The disordered stretch occupies residues 1984–2009; it reads PSYDRVTKPIVEKHEQEGKDEKAKGK. A compositionally biased stretch (basic and acidic residues) spans 1988-2009; the sequence is RVTKPIVEKHEQEGKDEKAKGK.

Belongs to the sodium channel (TC 1.A.1.10) family. Nav1.1/SCN1A subfamily. As to quaternary structure, the Nav1.1 voltage-gated sodium channel consists of an ion-conducting alpha subunit SCN1A which is functional on its own regulated by one or more beta-1 (SCN1B), beta-2 (SCN2B), beta-3 (SCN3B) and beta-4 (SCN4B) subunits. SCN1B and SCN3B are non-covalently associated with SCN1A. SCN2B and SCN4B are disulfide-linked to SCN1A. SCN1B regulates both the expression at the plasma membrane and the voltage dependence of Nav1.1 inactivation. SCN3B and SCN4B reduce Nav1.1 conductance. Probably interacts with TMEM233; modulates the gating properties of NaV1.1. Interacts with FGF13; regulates the steady-state inactivation of Nav.1.1. Phosphorylation at Ser-1516 by PKC in a highly conserved cytoplasmic loop slows inactivation of the sodium channel and reduces peak sodium currents. As to expression, present in cerebellar Purkinje neurons (at protein level). Expressed by myelinated, non-C-fiber neurons in sensory ganglia.

It is found in the cell membrane. It catalyses the reaction Na(+)(in) = Na(+)(out). Its activity is regulated as follows. Activated by the spider toxins Hm1a and Hm1b (H.maculata, AC P60992 and AC P0DOC5) eliciting acute pain and mechanical allodynia. Pore-forming subunit of Nav1.1, a voltage-gated sodium (Nav) channel that directly mediates the depolarizing phase of action potentials in excitable membranes. Navs, also called VGSCs (voltage-gated sodium channels) or VDSCs (voltage-dependent sodium channels), operate by switching between closed and open conformations depending on the voltage difference across the membrane. In the open conformation they allow Na(+) ions to selectively pass through the pore, along their electrochemical gradient. The influx of Na(+) ions provokes membrane depolarization, initiating the propagation of electrical signals throughout cells and tissues. By regulating the excitability of neurons, ensures that they respond appropriately to synaptic inputs, maintaining the balance between excitation and inhibition in brain neural circuits. Nav1.1 plays a role in controlling the excitability and action potential propagation from somatosensory neurons, thereby contributing to the sensory perception of mechanically-induced pain. This chain is Sodium channel protein type 1 subunit alpha, found in Mus musculus (Mouse).